The primary structure comprises 89 residues: Small ribosomal subunit protein bS20 (89 aa).

The segment at 1-26 (MANIKASKKDALTSEKRRKKNSSRRS) is disordered. A compositionally biased stretch (basic residues) spans 16–26 (KRRKKNSSRRS).

The protein belongs to the bacterial ribosomal protein bS20 family.

Functionally, binds directly to 16S ribosomal RNA. The polypeptide is Small ribosomal subunit protein bS20 (Buchnera aphidicola subsp. Acyrthosiphon pisum (strain 5A)).